A 179-amino-acid polypeptide reads, in one-letter code: Large ribosomal subunit protein uL6 (179 aa).

The protein belongs to the universal ribosomal protein uL6 family. Part of the 50S ribosomal subunit.

Functionally, this protein binds to the 23S rRNA, and is important in its secondary structure. It is located near the subunit interface in the base of the L7/L12 stalk, and near the tRNA binding site of the peptidyltransferase center. This is Large ribosomal subunit protein uL6 from Geotalea daltonii (strain DSM 22248 / JCM 15807 / FRC-32) (Geobacter daltonii).